A 251-amino-acid polypeptide reads, in one-letter code: Membrane-anchored junction protein (251 aa).

The Nuclear portion of the chain corresponds to M1–P227. Residues R140–K225 form a disordered region. The segment covering E183–T198 has biased composition (polar residues). Residues A228 to F246 form a helical membrane-spanning segment. Topologically, residues R247–Q251 are perinuclear space.

Belongs to the MAJIN family. Component of the MAJIN-TERB1-TERB2 complex, composed of MAJIN, TERB1 and TERB2.

The protein resides in the nucleus inner membrane. The protein localises to the chromosome. It is found in the telomere. In terms of biological role, meiosis-specific telomere-associated protein involved in meiotic telomere attachment to the nucleus inner membrane, a crucial step for homologous pairing and synapsis. Component of the MAJIN-TERB1-TERB2 complex, which promotes telomere cap exchange by mediating attachment of telomeric DNA to the inner nuclear membrane and replacement of the protective cap of telomeric chromosomes: in early meiosis, the MAJIN-TERB1-TERB2 complex associates with telomeric DNA and the shelterin/telosome complex. During prophase, the complex matures and promotes release of the shelterin/telosome complex from telomeric DNA. In the complex, MAJIN acts as the anchoring subunit to the nucleus inner membrane. MAJIN shows DNA-binding activity, possibly for the stabilization of telomere attachment on the nucleus inner membrane. This chain is Membrane-anchored junction protein, found in Rattus norvegicus (Rat).